Consider the following 329-residue polypeptide: Biotin synthase (329 aa).

Positions 38–262 (NTIQVSTLLS…IMPHSYIRLS (225 aa)) constitute a Radical SAM core domain. Residues Cys-53, Cys-57, and Cys-60 each coordinate [4Fe-4S] cluster. [2Fe-2S] cluster-binding residues include Cys-97, Cys-128, Cys-188, and Arg-260.

This sequence belongs to the radical SAM superfamily. Biotin synthase family. Homodimer. [4Fe-4S] cluster serves as cofactor. It depends on [2Fe-2S] cluster as a cofactor.

The catalysed reaction is (4R,5S)-dethiobiotin + (sulfur carrier)-SH + 2 reduced [2Fe-2S]-[ferredoxin] + 2 S-adenosyl-L-methionine = (sulfur carrier)-H + biotin + 2 5'-deoxyadenosine + 2 L-methionine + 2 oxidized [2Fe-2S]-[ferredoxin]. The protein operates within cofactor biosynthesis; biotin biosynthesis; biotin from 7,8-diaminononanoate: step 2/2. Catalyzes the conversion of dethiobiotin (DTB) to biotin by the insertion of a sulfur atom into dethiobiotin via a radical-based mechanism. This chain is Biotin synthase, found in Acinetobacter baumannii (strain SDF).